We begin with the raw amino-acid sequence, 242 residues long: Uridylate kinase (242 aa).

Residue 15–18 (KLSG) coordinates ATP. The interval 23-28 (GAEGFG) is involved in allosteric activation by GTP. Position 57 (glycine 57) interacts with UMP. Residues glycine 58 and arginine 62 each contribute to the ATP site. Residues aspartate 77 and 138 to 145 (TGNPFFTT) contribute to the UMP site. Threonine 165, tyrosine 171, and aspartate 174 together coordinate ATP.

This sequence belongs to the UMP kinase family. In terms of assembly, homohexamer.

The protein resides in the cytoplasm. The catalysed reaction is UMP + ATP = UDP + ADP. The protein operates within pyrimidine metabolism; CTP biosynthesis via de novo pathway; UDP from UMP (UMPK route): step 1/1. Allosterically activated by GTP. Inhibited by UTP. Its function is as follows. Catalyzes the reversible phosphorylation of UMP to UDP. This is Uridylate kinase from Photorhabdus laumondii subsp. laumondii (strain DSM 15139 / CIP 105565 / TT01) (Photorhabdus luminescens subsp. laumondii).